Here is a 280-residue protein sequence, read N- to C-terminus: F420-dependent methylenetetrahydromethanopterin dehydrogenase (280 aa).

This sequence belongs to the MTD family.

It carries out the reaction 5,10-methylenetetrahydromethanopterin + oxidized coenzyme F420-(gamma-L-Glu)(n) + 2 H(+) = 5,10-methenyl-5,6,7,8-tetrahydromethanopterin + reduced coenzyme F420-(gamma-L-Glu)(n). Its pathway is one-carbon metabolism; methanogenesis from CO(2); 5,10-methylene-5,6,7,8-tetrahydromethanopterin from 5,10-methenyl-5,6,7,8-tetrahydromethanopterin (coenzyme F420 route): step 1/1. Its function is as follows. Catalyzes the reversible reduction of methenyl-H(4)MPT(+) to methylene-H(4)MPT. The chain is F420-dependent methylenetetrahydromethanopterin dehydrogenase from Methanocorpusculum labreanum (strain ATCC 43576 / DSM 4855 / Z).